Consider the following 130-residue polypeptide: Small ribosomal subunit protein uS11 (130 aa).

It belongs to the universal ribosomal protein uS11 family. Part of the 30S ribosomal subunit. Interacts with proteins S7 and S18. Binds to IF-3.

Functionally, located on the platform of the 30S subunit, it bridges several disparate RNA helices of the 16S rRNA. Forms part of the Shine-Dalgarno cleft in the 70S ribosome. The chain is Small ribosomal subunit protein uS11 from Acidiphilium cryptum (strain JF-5).